A 598-amino-acid chain; its full sequence is Protein VASCULAR ASSOCIATED DEATH 1, chloroplastic (598 aa).

The span at 1–11 shows a compositional bias: polar residues; sequence MAMLSTASVSG. The tract at residues 1–64 is disordered; that stretch reads MAMLSTASVS…PSRGGDNQSE (64 aa). A chloroplast-targeting transit peptide spans 1–68; that stretch reads MAMLSTASVS…GDNQSEVISK (68 aa). Residue Asn61 is glycosylated (N-linked (GlcNAc...) asparagine). Residues 70-134 enclose the GRAM domain; that stretch reads EEYRQLFRLP…PFAEISCVKR (65 aa). In terms of domain architecture, VASt spans 272–444; that stretch reads DFTKVAEAKF…MAHELLKQKK (173 aa). Residues Asn329 and Asn494 are each glycosylated (N-linked (GlcNAc...) asparagine). The chain crosses the membrane as a helical span at residues 507-527; it reads QVIVLAFAVILLMQVTIVVLL. Positions 553-595 form a coiled coil; that stretch reads WLEKRMHFLREEMMMVEDRLQRMRQDHAALKAQFHHLERLLRR.

Its subcellular location is the membrane. The protein resides in the plastid. It localises to the chloroplast. Involved in ethylene- and salicylic acid-dependent cell death control associated with cells in the vicinity of vascular bundles. This Arabidopsis thaliana (Mouse-ear cress) protein is Protein VASCULAR ASSOCIATED DEATH 1, chloroplastic.